A 306-amino-acid polypeptide reads, in one-letter code: tRNA dimethylallyltransferase (306 aa).

An ATP-binding site is contributed by 13-20; that stretch reads GPTGAGKT. 15 to 20 provides a ligand contact to substrate; that stretch reads TGAGKT. Interaction with substrate tRNA regions lie at residues 38-41 and 161-165; these read DSRQ and QRNAR.

The protein belongs to the IPP transferase family. As to quaternary structure, monomer. Requires Mg(2+) as cofactor.

The enzyme catalyses adenosine(37) in tRNA + dimethylallyl diphosphate = N(6)-dimethylallyladenosine(37) in tRNA + diphosphate. Functionally, catalyzes the transfer of a dimethylallyl group onto the adenine at position 37 in tRNAs that read codons beginning with uridine, leading to the formation of N6-(dimethylallyl)adenosine (i(6)A). The polypeptide is tRNA dimethylallyltransferase (Maridesulfovibrio salexigens (strain ATCC 14822 / DSM 2638 / NCIMB 8403 / VKM B-1763) (Desulfovibrio salexigens)).